Consider the following 218-residue polypeptide: C-type lectin domain family 2 member H (218 aa).

The Cytoplasmic segment spans residues 1–52 (MNAAKVETSSMGMLQRADLTAADCLQEGEMGKKIQGKCFRIISTVSPVKLYC). Residues 53–73 (CYGVIMVLTVAVIALSVALSV) traverse the membrane as a helical; Signal-anchor for type II membrane protein segment. The Extracellular segment spans residues 74–218 (RNKIPAMEDR…SRVGSVPRHV (145 aa)). A disulfide bridge links Cys-90 with Cys-101. Residues 97–201 (FGSKCFYFSE…SYTHRKWICS (105 aa)) form the C-type lectin domain. A glycan (N-linked (GlcNAc...) asparagine) is linked at Asn-110. A disulfide bond links Cys-118 and Cys-200.

In terms of tissue distribution, detected in ileum, liver, kidney and in IL2-activated natural killer cells.

The protein localises to the cell membrane. Functionally, lectin-type cell surface receptor. This is C-type lectin domain family 2 member H (Clec2h) from Mus musculus (Mouse).